A 1194-amino-acid polypeptide reads, in one-letter code: Rho-associated protein kinase let-502 (1194 aa).

The Protein kinase domain occupies 68-330; the sequence is FRQLKVIGRG…VDEIRNHKFF (263 aa). Residues 74–82 and lysine 97 contribute to the ATP site; that span reads IGRGAFGEV. Aspartate 190 functions as the Proton acceptor in the catalytic mechanism. The 72-residue stretch at 331 to 402 folds into the AGC-kinase C-terminal domain; sequence KNDEWTFETL…SNEYSPVKKL (72 aa). 2 coiled-coil regions span residues 436 to 844 and 875 to 933; these read EEQY…MAKR and GRIL…EYPQ. Residues 784 to 846 form the RhoBD domain; sequence EQNLKHIENQ…LEEEMAKRQP (63 aa). Positions 961–1171 constitute a PH domain; the sequence is IQIDGWLSLR…SQLRRFIEAS (211 aa). Residues 1085–1138 form a Phorbol-ester/DAG-type zinc finger; it reads RHDFQELSYHTRTYCDDCGKKLSDFIRPTPAFECKNCHYKTHKEHIAQGTITMC.

Belongs to the protein kinase superfamily. AGC Ser/Thr protein kinase family. In terms of assembly, interacts with rho-1. Requires Mg(2+) as cofactor.

The protein resides in the cytoplasm. It localises to the cytoskeleton. The protein localises to the cleavage furrow. The enzyme catalyses L-seryl-[protein] + ATP = O-phospho-L-seryl-[protein] + ADP + H(+). It carries out the reaction L-threonyl-[protein] + ATP = O-phospho-L-threonyl-[protein] + ADP + H(+). Activated by rho-1 binding. Functionally, negatively regulates mel-11 to relieve the inhibition of mlc-4, allowing contraction of the circumferentially oriented microfilaments in epidermal cells and thereby regulating myosin II contractility during spermathecal contraction, cleavage furrow contraction in early embryos, and embryonic elongation and morphogenesis. Required for P-cell migration. May also play a role in oocyte cellularization. The protein is Rho-associated protein kinase let-502 of Caenorhabditis briggsae.